The chain runs to 470 residues: Probable citrate synthase, mitochondrial (470 aa).

Active-site residues include H297, H351, and D406.

It belongs to the citrate synthase family. Homodimer.

The protein localises to the mitochondrion matrix. It carries out the reaction oxaloacetate + acetyl-CoA + H2O = citrate + CoA + H(+). It functions in the pathway carbohydrate metabolism; tricarboxylic acid cycle; isocitrate from oxaloacetate: step 1/2. The protein is Probable citrate synthase, mitochondrial of Leishmania infantum.